The primary structure comprises 402 residues: Nicotinate phosphoribosyltransferase (402 aa).

H224 bears the Phosphohistidine; by autocatalysis mark.

This sequence belongs to the NAPRTase family. Transiently phosphorylated on a His residue during the reaction cycle. Phosphorylation strongly increases the affinity for substrates and increases the rate of nicotinate D-ribonucleotide production. Dephosphorylation regenerates the low-affinity form of the enzyme, leading to product release.

The enzyme catalyses nicotinate + 5-phospho-alpha-D-ribose 1-diphosphate + ATP + H2O = nicotinate beta-D-ribonucleotide + ADP + phosphate + diphosphate. It participates in cofactor biosynthesis; NAD(+) biosynthesis; nicotinate D-ribonucleotide from nicotinate: step 1/1. Its function is as follows. Catalyzes the synthesis of beta-nicotinate D-ribonucleotide from nicotinate and 5-phospho-D-ribose 1-phosphate at the expense of ATP. In Neisseria gonorrhoeae (strain ATCC 700825 / FA 1090), this protein is Nicotinate phosphoribosyltransferase.